The chain runs to 488 residues: Protein nucleotidyltransferase YdiU (488 aa).

ATP-binding residues include G91, G93, R94, K114, D126, G127, R177, and R184. The segment at 108-127 is disordered; it reads RFDIQLKGSGPTPYSRRGDG. D253 serves as the catalytic Proton acceptor. Residues N254 and D263 each contribute to the Mg(2+) site. D263 provides a ligand contact to ATP.

This sequence belongs to the SELO family. Mg(2+) serves as cofactor. The cofactor is Mn(2+).

It carries out the reaction L-seryl-[protein] + ATP = 3-O-(5'-adenylyl)-L-seryl-[protein] + diphosphate. It catalyses the reaction L-threonyl-[protein] + ATP = 3-O-(5'-adenylyl)-L-threonyl-[protein] + diphosphate. The enzyme catalyses L-tyrosyl-[protein] + ATP = O-(5'-adenylyl)-L-tyrosyl-[protein] + diphosphate. The catalysed reaction is L-histidyl-[protein] + UTP = N(tele)-(5'-uridylyl)-L-histidyl-[protein] + diphosphate. It carries out the reaction L-seryl-[protein] + UTP = O-(5'-uridylyl)-L-seryl-[protein] + diphosphate. It catalyses the reaction L-tyrosyl-[protein] + UTP = O-(5'-uridylyl)-L-tyrosyl-[protein] + diphosphate. Functionally, nucleotidyltransferase involved in the post-translational modification of proteins. It can catalyze the addition of adenosine monophosphate (AMP) or uridine monophosphate (UMP) to a protein, resulting in modifications known as AMPylation and UMPylation. The protein is Protein nucleotidyltransferase YdiU of Bacillus anthracis (strain A0248).